The sequence spans 208 residues: High frequency lysogenization protein HflD homolog (208 aa).

It belongs to the HflD family.

The protein localises to the cytoplasm. It localises to the cell inner membrane. This Yersinia enterocolitica serotype O:8 / biotype 1B (strain NCTC 13174 / 8081) protein is High frequency lysogenization protein HflD homolog.